Reading from the N-terminus, the 736-residue chain is Putative ATP-dependent RNA helicase CG14443 (736 aa).

Disordered stretches follow at residues 32 to 58, 73 to 166, 183 to 237, and 265 to 296; these read TKSSIWGSSASDISGQSRSLKSSSSVL, GIEG…GERP, NSFK…NSWR, and SFTRSRSPHRNTLCYQDQSKNPSRPSNYNTWK. Composition is skewed to low complexity over residues 34–58 and 125–160; these read SSIWGSSASDISGQSRSLKSSSSVL and SSESAHSSGSESSSSDSNSGSSSDSDSTTGSSSHGS. The segment covering 190–199 has biased composition (basic and acidic residues); it reads TSRENKESRS. The span at 277-296 shows a compositional bias: polar residues; sequence LCYQDQSKNPSRPSNYNTWK. A Q motif motif is present at residues 330–358; it reads LSFERSGFNATILQQLEDQGYDGPTPIQA. One can recognise a Helicase ATP-binding domain in the interval 361-534; it reads WSIAKEGKNI…NKFLGQYTAI (174 aa). ATP is bound at residue 374-381; sequence SGKGTGKT. Residues 482-485 carry the DEAD box motif; that stretch reads DNID. The 159-residue stretch at 561–719 folds into the Helicase C-terminal domain; that stretch reads KVERLMKELT…LLQLAEEKMF (159 aa).

It belongs to the DEAD box helicase family.

The catalysed reaction is ATP + H2O = ADP + phosphate + H(+). Its function is as follows. Probable ATP-binding RNA helicase. This chain is Putative ATP-dependent RNA helicase CG14443, found in Drosophila melanogaster (Fruit fly).